We begin with the raw amino-acid sequence, 319 residues long: Ester hydrolase C11orf54 homolog (319 aa).

Zn(2+)-binding residues include His-270, His-272, and His-282.

Monomer. Zn(2+) serves as cofactor.

The protein localises to the nucleus. It localises to the cytoplasm. Functionally, exhibits ester hydrolase activity on the substrate p-nitrophenyl acetate, in vitro. May regulate DNA damage and repair by regulating HIF1A degradation via chaperone-mediated autophagy (CMA). This is Ester hydrolase C11orf54 homolog from Danio rerio (Zebrafish).